The primary structure comprises 181 residues: Probable inosine/xanthosine triphosphatase (181 aa).

Asp-65 serves as a coordination point for Mg(2+).

Belongs to the YjjX NTPase family. As to quaternary structure, homodimer. Requires Mg(2+) as cofactor. Mn(2+) is required as a cofactor.

The enzyme catalyses XTP + H2O = XDP + phosphate + H(+). It catalyses the reaction ITP + H2O = IDP + phosphate + H(+). In terms of biological role, phosphatase that hydrolyzes non-canonical purine nucleotides such as XTP and ITP to their respective diphosphate derivatives. Probably excludes non-canonical purines from DNA/RNA precursor pool, thus preventing their incorporation into DNA/RNA and avoiding chromosomal lesions. This chain is Probable inosine/xanthosine triphosphatase, found in Caldivirga maquilingensis (strain ATCC 700844 / DSM 13496 / JCM 10307 / IC-167).